We begin with the raw amino-acid sequence, 235 residues long: Chalcone--flavanone isomerase 1 (235 aa).

2 residues coordinate substrate: Thr-50 and Ser-192.

This sequence belongs to the chalcone isomerase family.

The enzyme catalyses a chalcone = a flavanone.. It functions in the pathway secondary metabolite biosynthesis; flavonoid biosynthesis. Catalyzes the intramolecular cyclization of bicyclic chalcones into tricyclic (S)-flavanones. Responsible for the isomerization of 4,2',4',6'-tetrahydroxychalcone (also termed chalcone) into naringenin. The chain is Chalcone--flavanone isomerase 1 (CHI1) from Chrysanthemum morifolium (Florist's daisy).